The sequence spans 234 residues: MKNMLLMSGSKYKDTAYLVHTLPWLAQFLADYKGKKVAFVPYAGVRRSFDEYETTVQNALQSLELEIVSVHRGKQHRDIIEQADVIAIGGGNTFCLLKQMYEHDLLDAIRAKVNSGTPYFGWSAGANVAGSSIMTTNDMPITYPPSFNALNLFPHQINPHFISGKMQGHNGESREERLEEFLIVNPQSLVYAMPEGTALHIQGEQATVLGAQDILCFSEKMQLDTKAVNSTFNY.

Catalysis depends on charge relay system residues Ser-123, Asp-138, and His-160.

This sequence belongs to the peptidase S51 family.

It localises to the cytoplasm. It catalyses the reaction Dipeptidase E catalyzes the hydrolysis of dipeptides Asp-|-Xaa. It does not act on peptides with N-terminal Glu, Asn or Gln, nor does it cleave isoaspartyl peptides.. Its function is as follows. Hydrolyzes dipeptides containing N-terminal aspartate residues. May play a role in allowing the cell to use peptide aspartate to spare carbon otherwise required for the synthesis of the aspartate family of amino acids. In Actinobacillus pleuropneumoniae serotype 7 (strain AP76), this protein is Peptidase E.